A 631-amino-acid polypeptide reads, in one-letter code: MAKVNTQCSQPSPTQLSIKNADRDLDHVENGLGRVSRLIISIRAWASRHLHDEDQTPDSFLDRFHGSELKEVSTRESNAQPNPGEQKPPDGGEGRKEEPIVVDPSSNIYYRWLTAIALPVFYNWCLLVCRACFDELQSEHLTLWLVLDYSADVLYVLDMLVRARTGFLEQGLMVRDTKRLWKHYTKTLHFKLDILSLIPTDLAYLKLGVNYPELRFNRLLKFSRLFEFFDRTETRTNYPNVFRIGNLVLYTLIIIHWNACIYFAISKFIGFGTDSWVYPNTSKPEYARLSRKYIYSLYWSTLTLTTIGETPPPVKDEEYLFVVIDFLVGILIFATIVGNVGSMISNMNAPRVEFQAKIDSVKQYMQFRKVTKDLETRVIRWFDYLWANRKTVDEKEVLKNLPDKLKAEIAINVHLDTLKKVRIFQDCEAGLLVELVLKLRPTVFSPGDYICKKGDIGREMYIIKEGKLAVVADDGVTQFVVLSDGSYFGEISILNIKGSKSGNRRTANIRSIGYSDLFCLSKDDLMEALTEYPDAKRALEEKGRQILMKDNLIDEDLVAARVDTRDVEEKVEYLESSLDILQTRFARLLAEYSASQMKLKQRLTRLESQMNRRCCGFSPDRENSEDASKTD.

Over residues Met1–Ile18 the composition is skewed to polar residues. Disordered stretches follow at residues Met1–Ala21 and Glu71–Glu98. At Met1–Arg111 the chain is on the cytoplasmic side. Residues Lys87–Glu98 are compositionally biased toward basic and acidic residues. The chain crosses the membrane as a helical span at residues Trp112–Phe133. Over Asp134–Glu139 the chain is Extracellular. A helical membrane pass occupies residues His140 to Leu160. At Val161–Thr187 the chain is on the cytoplasmic side. Residues Leu188–Leu207 form a helical membrane-spanning segment. The Extracellular portion of the chain corresponds to Gly208 to Tyr211. Residues Pro212 to Phe229 traverse the membrane as a helical segment. At Asp230–Pro239 the chain is on the cytoplasmic side. Residues Pro239 to Met347 form an ion conduction pathway region. A helical membrane pass occupies residues Asn240–Tyr262. The Extracellular portion of the chain corresponds to Phe263–Arg288. Asn280 is a glycosylation site (N-linked (GalNAc...) asparagine). Transmembrane regions (helical) follow at residues Leu289–Tyr319 and Leu320–Ile344. Positions Thr306 to Glu309 are selectivity filter. Over Ser345–Asp631 the chain is Cytoplasmic. Positions Ala349 to Asp426 are C-linker. A cyclic nucleotide-binding domain region spans residues Ala429–Lys549. 3',5'-cyclic GMP-binding residues include Gly489, Glu490, Ser492, Arg505, Thr506, and Asp550. A coiled-coil region spans residues Val567–Met610.

The protein belongs to the cyclic nucleotide-gated cation channel (TC 1.A.1.5) family. CNGA3 subfamily. In terms of assembly, forms heterotetrameric channels composed of CNGA3 and CNGB3 subunits with 3:1 stoichiometry. In terms of tissue distribution, prominently expressed in retina.

The protein localises to the cell membrane. It carries out the reaction Ca(2+)(in) = Ca(2+)(out). The catalysed reaction is Na(+)(in) = Na(+)(out). The enzyme catalyses K(+)(in) = K(+)(out). It catalyses the reaction NH4(+)(in) = NH4(+)(out). It carries out the reaction Rb(+)(in) = Rb(+)(out). The catalysed reaction is Li(+)(in) = Li(+)(out). The enzyme catalyses Cs(+)(in) = Cs(+)(out). Its function is as follows. Pore-forming subunit of the cone cyclic nucleotide-gated channel. Mediates cone photoresponses at bright light converting transient changes in intracellular cGMP levels into electrical signals. In the dark, cGMP levels are high and keep the channel open enabling a steady inward current carried by Na(+) and Ca(2+) ions that leads to membrane depolarization and neurotransmitter release from synaptic terminals. Upon photon absorption cGMP levels decline leading to channel closure and membrane hyperpolarization that ultimately slows neurotransmitter release and signals the presence of light, the end point of the phototransduction cascade. Pore-forming subunit of the gustatory cyclic nucleotide-gated channel. In the taste buds, may sense oral extracellular pH and conduct ion currents that modulate the excitability of taste cells. Conducts cGMP- and cAMP-gated ion currents, with permeability for monovalent and divalent cations. In Mus musculus (Mouse), this protein is Cyclic nucleotide-gated channel alpha-3.